The following is a 120-amino-acid chain: uncharacterized protein (120 aa).

The interval 79–120 (TGNEIPPEPEQEVVASPVTEQKKAEPSAPPKGSKKKKRGKKK) is disordered. Residues 110-120 (GSKKKKRGKKK) are compositionally biased toward basic residues.

This is an uncharacterized protein from Schizosaccharomyces pombe (strain 972 / ATCC 24843) (Fission yeast).